Consider the following 429-residue polypeptide: Adenylosuccinate synthetase (429 aa).

Residues 12–18 (GDEGKGK) and 40–42 (GHT) contribute to the GTP site. Residue D13 is the Proton acceptor of the active site. Residues D13 and G40 each contribute to the Mg(2+) site. Residues 13–16 (DEGK), 38–41 (NAGH), T129, R143, Q223, T238, and R302 each bind IMP. The active-site Proton donor is the H41. Substrate is bound at residue 298 to 304 (VVTGRKR). Residues R304, 330 to 332 (KLD), and 412 to 414 (STS) each bind GTP.

It belongs to the adenylosuccinate synthetase family. As to quaternary structure, homodimer. It depends on Mg(2+) as a cofactor.

It is found in the cytoplasm. The catalysed reaction is IMP + L-aspartate + GTP = N(6)-(1,2-dicarboxyethyl)-AMP + GDP + phosphate + 2 H(+). The protein operates within purine metabolism; AMP biosynthesis via de novo pathway; AMP from IMP: step 1/2. Functionally, plays an important role in the de novo pathway of purine nucleotide biosynthesis. Catalyzes the first committed step in the biosynthesis of AMP from IMP. This chain is Adenylosuccinate synthetase, found in Brucella abortus (strain 2308).